The following is a 508-amino-acid chain: Photosystem II CP47 reaction center protein (508 aa).

6 helical membrane passes run 21–36 (AVHI…WAGS), 101–115 (IILS…IWHW), 140–156 (GIHL…FGAF), 203–218 (IAAG…FHLS), 237–252 (VLSS…AFVV), and 457–472 (NFAL…HGGR).

The protein belongs to the PsbB/PsbC family. PsbB subfamily. As to quaternary structure, PSII is composed of 1 copy each of membrane proteins PsbA, PsbB, PsbC, PsbD, PsbE, PsbF, PsbH, PsbI, PsbJ, PsbK, PsbL, PsbM, PsbT, PsbX, PsbY, PsbZ, Psb30/Ycf12, at least 3 peripheral proteins of the oxygen-evolving complex and a large number of cofactors. It forms dimeric complexes. The cofactor is Binds multiple chlorophylls. PSII binds additional chlorophylls, carotenoids and specific lipids..

The protein localises to the plastid. It localises to the chloroplast thylakoid membrane. Its function is as follows. One of the components of the core complex of photosystem II (PSII). It binds chlorophyll and helps catalyze the primary light-induced photochemical processes of PSII. PSII is a light-driven water:plastoquinone oxidoreductase, using light energy to abstract electrons from H(2)O, generating O(2) and a proton gradient subsequently used for ATP formation. This is Photosystem II CP47 reaction center protein from Chaetosphaeridium globosum (Charophycean green alga).